We begin with the raw amino-acid sequence, 271 residues long: NADPH-dependent 7-cyano-7-deazaguanine reductase (271 aa).

Residue 81-83 (IES) coordinates substrate. NADPH is bound at residue 83–84 (SK). Residue Cys-177 is the Thioimide intermediate of the active site. Asp-184 serves as the catalytic Proton donor. 216-217 (HE) provides a ligand contact to substrate. 245–246 (RG) provides a ligand contact to NADPH.

The protein belongs to the GTP cyclohydrolase I family. QueF type 2 subfamily. As to quaternary structure, homodimer.

It localises to the cytoplasm. It catalyses the reaction 7-aminomethyl-7-carbaguanine + 2 NADP(+) = 7-cyano-7-deazaguanine + 2 NADPH + 3 H(+). The protein operates within tRNA modification; tRNA-queuosine biosynthesis. Catalyzes the NADPH-dependent reduction of 7-cyano-7-deazaguanine (preQ0) to 7-aminomethyl-7-deazaguanine (preQ1). The sequence is that of NADPH-dependent 7-cyano-7-deazaguanine reductase from Xanthomonas axonopodis pv. citri (strain 306).